We begin with the raw amino-acid sequence, 118 residues long: Large ribosomal subunit protein bL20 (118 aa).

It belongs to the bacterial ribosomal protein bL20 family.

Functionally, binds directly to 23S ribosomal RNA and is necessary for the in vitro assembly process of the 50S ribosomal subunit. It is not involved in the protein synthesizing functions of that subunit. This chain is Large ribosomal subunit protein bL20, found in Psychrobacter arcticus (strain DSM 17307 / VKM B-2377 / 273-4).